Here is a 94-residue protein sequence, read N- to C-terminus: Small ribosomal subunit protein uS19 (94 aa).

Belongs to the universal ribosomal protein uS19 family.

Its function is as follows. Protein S19 forms a complex with S13 that binds strongly to the 16S ribosomal RNA. The chain is Small ribosomal subunit protein uS19 from Clostridium novyi (strain NT).